Here is a 956-residue protein sequence, read N- to C-terminus: UvrABC system protein A (956 aa).

ATP is bound at residue 33–40 (GLSGSGKS). The C4-type zinc finger occupies 252–279 (CPYCGFSVGELEPRMFSFNSPFGACPTC). ABC transporter domains lie at 309–587 (WRPI…KNSI) and 607–936 (GNGL…KYLK). 639–646 (GVSGSGKS) lines the ATP pocket. The C4-type zinc-finger motif lies at 738 to 764 (CEACKGDGIIKIEMHFLPDVYVPCEVC).

This sequence belongs to the ABC transporter superfamily. UvrA family. Forms a heterotetramer with UvrB during the search for lesions.

Its subcellular location is the cytoplasm. Its function is as follows. The UvrABC repair system catalyzes the recognition and processing of DNA lesions. UvrA is an ATPase and a DNA-binding protein. A damage recognition complex composed of 2 UvrA and 2 UvrB subunits scans DNA for abnormalities. When the presence of a lesion has been verified by UvrB, the UvrA molecules dissociate. In Listeria monocytogenes serotype 4b (strain F2365), this protein is UvrABC system protein A.